A 159-amino-acid chain; its full sequence is NADH-quinone oxidoreductase subunit I (159 aa).

2 consecutive 4Fe-4S ferredoxin-type domains span residues 51 to 80 and 90 to 119; these read RRYENGEERCIACKLCEAVCPAQAIVIESD and TRYDIDMTKCIYCGLCQEACPVDAIVEGPN. [4Fe-4S] cluster-binding residues include cysteine 60, cysteine 63, cysteine 66, cysteine 70, cysteine 99, cysteine 102, cysteine 105, and cysteine 109.

Belongs to the complex I 23 kDa subunit family. As to quaternary structure, NDH-1 is composed of 14 different subunits. Subunits NuoA, H, J, K, L, M, N constitute the membrane sector of the complex. The cofactor is [4Fe-4S] cluster.

It is found in the cell inner membrane. It carries out the reaction a quinone + NADH + 5 H(+)(in) = a quinol + NAD(+) + 4 H(+)(out). Functionally, NDH-1 shuttles electrons from NADH, via FMN and iron-sulfur (Fe-S) centers, to quinones in the respiratory chain. The immediate electron acceptor for the enzyme in this species is believed to be ubiquinone. Couples the redox reaction to proton translocation (for every two electrons transferred, four hydrogen ions are translocated across the cytoplasmic membrane), and thus conserves the redox energy in a proton gradient. In Rickettsia typhi (strain ATCC VR-144 / Wilmington), this protein is NADH-quinone oxidoreductase subunit I.